The sequence spans 512 residues: Tyrosine-protein kinase Lyn (512 aa).

Positions 1-62 are disordered; it reads MGCIKSKGKD…GQRFQTKDPE (62 aa). Glycine 2 carries N-myristoyl glycine lipidation. The S-palmitoyl cysteine moiety is linked to residue cysteine 3. Residues serine 11 and serine 13 each carry the phosphoserine modification. The region spanning 63–123 is the SH3 domain; sequence EQGDIVVALY…PSNYVAKLNT (61 aa). The region spanning 129–226 is the SH2 domain; the sequence is WFFKDITRKD…GLCRRLEKAC (98 aa). Tyrosine 193 is modified (phosphotyrosine). Position 228 is a phosphoserine (serine 228). One can recognise a Protein kinase domain in the interval 247 to 501; that stretch reads IKLVKRLGAG…YLQSVLDDFY (255 aa). ATP-binding positions include 253 to 261 and lysine 275; that span reads LGAGQFGEV. Phosphotyrosine occurs at positions 306 and 316. Aspartate 367 serves as the catalytic Proton acceptor. The residue at position 397 (tyrosine 397) is a Phosphotyrosine; by autocatalysis. 2 positions are modified to phosphotyrosine: tyrosine 460 and tyrosine 473. A Phosphotyrosine; by autocatalysis, CSK and MATK modification is found at tyrosine 508.

The protein belongs to the protein kinase superfamily. Tyr protein kinase family. SRC subfamily. In terms of assembly, interacts with TEC. Interacts (via SH2 domain) with FLT3 (tyrosine phosphorylated). Interacts with LIME1 and with CD79A upon activation of the B-cell antigen receptor. Interacts with the B-cell receptor complex. Interacts with phosphorylated THEMIS2. Interacts with EPOR. Interacts with MS4A2/FCER1B. Interaction (via the SH2 and SH3 domains) with MUC1 is stimulated by IL7 and the subsequent phosphorylation increases the binding between MUC1 and CTNNB1/beta-catenin. Interacts with ADAM15. Interacts with NDFIP2 and more weakly with NDFIP1. Interacts with FASLG. Interacts with KIT. Interacts with HCLS1. Interacts with FCGR2B. Interacts with FCGR1A; the interaction may be indirect. Interacts with CD19, CD22, CD79A and CD79B. Interacts (via SH3 domain) with CBLC, PPP1R15A and PDE4A. Interacts with TGFB1I1. Interacts (via SH3 domain) with PIK3R1, the regulatory subunit of phosphatidylinositol 3-kinase; this interaction enhances phosphatidylinositol 3-kinase activity. Interacts with CSF2RB, the common subunit of the IL3, IL5 and CSF2 receptors. Interacts with PAG1; identified in a complex with PAG1 and STAT3. Interacts with ABL1. Interacts with PTPN6/SHP-1. Interacts (via SH3 domain) with SCIMP (via proline-rich region). This interaction facilitates the phosphorylation of SCIMP on 'Tyr-107', which enhances binding of SCIMP to TLR4, and consequently the phosphorylation of TLR4 in response to stimulation by lipopolysaccharide in macrophages. Interacts with LPXN (via LD motif 3) and the interaction is induced upon B-cell antigen receptor (BCR) activation. Interacts (via SH3-domain) with ANKRD54 (via ankyrin repeat region) in an activation-independent status of LYN. Forms a multiprotein complex with ANKRD54 and HCLS1. Interacts (via SH2 and SH3 domains) with UNC119; leading to LYN activation. Interacts with CD36. Interacts with LYN. Interacts with SKAP1 and FYB1; this interaction promotes the phosphorylation of CLNK. Interacts with BCAR1/CAS and NEDD9/HEF1. As to quaternary structure, (Microbial infection) Interacts with Epstein-Barr virus LMP2A. (Microbial infection) Interacts with Herpes virus saimiri tyrosine kinase interacting protein (Tip). Post-translationally, ubiquitinated by CBL, leading to its degradation. Ubiquitination is SH3-dependent. In terms of processing, autophosphorylated. Phosphorylated on tyrosine residues in response to KIT signaling. Phosphorylation at Tyr-397 is required for optimal activity. Phosphorylation at Tyr-508 inhibits kinase activity. Phosphorylated at Tyr-508 by CSK. Dephosphorylated by PTPRC/CD45. Becomes rapidly phosphorylated upon activation of the B-cell receptor and the immunoglobulin receptor FCGR1A. Phosphorylated in response to ITGB1 in B-cells. In terms of tissue distribution, detected in monocytes (at protein level). Detected in placenta, and in fetal brain, lung, liver and kidney. Widely expressed in a variety of organs, tissues, and cell types such as epidermoid, hematopoietic, and neuronal cells. Expressed in primary neuroblastoma tumors.

The protein localises to the cell membrane. The protein resides in the nucleus. It is found in the cytoplasm. Its subcellular location is the perinuclear region. It localises to the golgi apparatus. The protein localises to the membrane. It catalyses the reaction L-tyrosyl-[protein] + ATP = O-phospho-L-tyrosyl-[protein] + ADP + H(+). Its activity is regulated as follows. Subject to autoinhibition, mediated by intramolecular interactions between the SH2 domain and the C-terminal phosphotyrosine. Phosphorylation at Tyr-397 is required for optimal activity. Phosphorylated by CSK at Tyr-508; phosphorylation at Tyr-508 inhibits kinase activity. Kinase activity is modulated by dephosphorylation by PTPRC/CD45. Inhibited by Dasatinib, PP2, and SU6656. Non-receptor tyrosine-protein kinase that transmits signals from cell surface receptors and plays an important role in the regulation of innate and adaptive immune responses, hematopoiesis, responses to growth factors and cytokines, integrin signaling, but also responses to DNA damage and genotoxic agents. Functions primarily as negative regulator, but can also function as activator, depending on the context. Required for the initiation of the B-cell response, but also for its down-regulation and termination. Plays an important role in the regulation of B-cell differentiation, proliferation, survival and apoptosis, and is important for immune self-tolerance. Acts downstream of several immune receptors, including the B-cell receptor, CD79A, CD79B, CD5, CD19, CD22, FCER1, FCGR2, FCGR1A, TLR2 and TLR4. Plays a role in the inflammatory response to bacterial lipopolysaccharide. Mediates the responses to cytokines and growth factors in hematopoietic progenitors, platelets, erythrocytes, and in mature myeloid cells, such as dendritic cells, neutrophils and eosinophils. Acts downstream of EPOR, KIT, MPL, the chemokine receptor CXCR4, as well as the receptors for IL3, IL5 and CSF2. Plays an important role in integrin signaling. Regulates cell proliferation, survival, differentiation, migration, adhesion, degranulation, and cytokine release. Involved in the regulation of endothelial activation, neutrophil adhesion and transendothelial migration. Down-regulates signaling pathways by phosphorylation of immunoreceptor tyrosine-based inhibitory motifs (ITIM), that then serve as binding sites for phosphatases, such as PTPN6/SHP-1, PTPN11/SHP-2 and INPP5D/SHIP-1, that modulate signaling by dephosphorylation of kinases and their substrates. Phosphorylates LIME1 in response to CD22 activation. Phosphorylates BTK, CBL, CD5, CD19, CD72, CD79A, CD79B, CSF2RB, DOK1, HCLS1, LILRB3/PIR-B, MS4A2/FCER1B, SYK and TEC. Promotes phosphorylation of SIRPA, PTPN6/SHP-1, PTPN11/SHP-2 and INPP5D/SHIP-1. Mediates phosphorylation of the BCR-ABL fusion protein. Required for rapid phosphorylation of FER in response to FCER1 activation. Mediates KIT phosphorylation. Acts as an effector of EPOR (erythropoietin receptor) in controlling KIT expression and may play a role in erythroid differentiation during the switch between proliferation and maturation. Depending on the context, activates or inhibits several signaling cascades. Regulates phosphatidylinositol 3-kinase activity and AKT1 activation. Regulates activation of the MAP kinase signaling cascade, including activation of MAP2K1/MEK1, MAPK1/ERK2, MAPK3/ERK1, MAPK8/JNK1 and MAPK9/JNK2. Mediates activation of STAT5A and/or STAT5B. Phosphorylates LPXN on 'Tyr-72'. Kinase activity facilitates TLR4-TLR6 heterodimerization and signal initiation. Phosphorylates SCIMP on 'Tyr-107'; this enhances binding of SCIMP to TLR4, promoting the phosphorylation of TLR4, and a selective cytokine response to lipopolysaccharide in macrophages. Phosphorylates CLNK. Phosphorylates BCAR1/CAS and NEDD9/HEF1. In Homo sapiens (Human), this protein is Tyrosine-protein kinase Lyn (LYN).